Here is an 86-residue protein sequence, read N- to C-terminus: Small ribosomal subunit protein uS17 (86 aa).

The protein belongs to the universal ribosomal protein uS17 family. As to quaternary structure, part of the 30S ribosomal subunit.

Functionally, one of the primary rRNA binding proteins, it binds specifically to the 5'-end of 16S ribosomal RNA. The sequence is that of Small ribosomal subunit protein uS17 from Shouchella clausii (strain KSM-K16) (Alkalihalobacillus clausii).